The primary structure comprises 211 residues: MTSLAVLLTLADSRLPTGAHVHSGGIEEAIAAGLVTGLATLEAFLKRRVRTHGLLTASIAAAVHRGELAVDDADRETDARTPAPAARHASRSQGRGLIRLARRVWPDSGWEELGPRPHLAVVAGRVGALSGLAPEHNALHLVYITMTGSAIAAQRLLALDPAEVTVVTFQLSELCEQIAQEATAGLADLSDPLLDTLAQRHDERVRPLFVS.

Residues 71–93 (DDADRETDARTPAPAARHASRSQ) are disordered.

It belongs to the UreF family. UreD, UreF and UreG form a complex that acts as a GTP-hydrolysis-dependent molecular chaperone, activating the urease apoprotein by helping to assemble the nickel containing metallocenter of UreC. The UreE protein probably delivers the nickel.

Its subcellular location is the cytoplasm. Required for maturation of urease via the functional incorporation of the urease nickel metallocenter. The sequence is that of Urease accessory protein UreF from Mycobacterium bovis (strain ATCC BAA-935 / AF2122/97).